The chain runs to 325 residues: Beta-ketoacyl-[acyl-carrier-protein] synthase III (325 aa).

Residues C116 and H252 contribute to the active site. The interval 253-257 (QANLR) is ACP-binding. The active site involves N282.

It belongs to the thiolase-like superfamily. FabH family. In terms of assembly, homodimer.

It is found in the cytoplasm. The enzyme catalyses malonyl-[ACP] + acetyl-CoA + H(+) = 3-oxobutanoyl-[ACP] + CO2 + CoA. It participates in lipid metabolism; fatty acid biosynthesis. Catalyzes the condensation reaction of fatty acid synthesis by the addition to an acyl acceptor of two carbons from malonyl-ACP. Catalyzes the first condensation reaction which initiates fatty acid synthesis and may therefore play a role in governing the total rate of fatty acid production. Possesses both acetoacetyl-ACP synthase and acetyl transacylase activities. Its substrate specificity determines the biosynthesis of branched-chain and/or straight-chain of fatty acids. This Xanthomonas oryzae pv. oryzae (strain MAFF 311018) protein is Beta-ketoacyl-[acyl-carrier-protein] synthase III.